Consider the following 106-residue polypeptide: Large ribosomal subunit protein bL21 (106 aa).

It belongs to the bacterial ribosomal protein bL21 family. Part of the 50S ribosomal subunit. Contacts protein L20.

This protein binds to 23S rRNA in the presence of protein L20. The sequence is that of Large ribosomal subunit protein bL21 from Syntrophobacter fumaroxidans (strain DSM 10017 / MPOB).